The following is a 943-amino-acid chain: Isoleucine--tRNA ligase (943 aa).

The 'HIGH' region motif lies at 58-68; sequence PYANGKIHIGH. Residue Glu-567 coordinates L-isoleucyl-5'-AMP. The short motif at 608–612 is the 'KMSKS' region element; that stretch reads KMSKS. Lys-611 lines the ATP pocket. Zn(2+) contacts are provided by Cys-906, Cys-909, Cys-926, and Cys-929.

Belongs to the class-I aminoacyl-tRNA synthetase family. IleS type 1 subfamily. Monomer. Requires Zn(2+) as cofactor.

It localises to the cytoplasm. It carries out the reaction tRNA(Ile) + L-isoleucine + ATP = L-isoleucyl-tRNA(Ile) + AMP + diphosphate. Functionally, catalyzes the attachment of isoleucine to tRNA(Ile). As IleRS can inadvertently accommodate and process structurally similar amino acids such as valine, to avoid such errors it has two additional distinct tRNA(Ile)-dependent editing activities. One activity is designated as 'pretransfer' editing and involves the hydrolysis of activated Val-AMP. The other activity is designated 'posttransfer' editing and involves deacylation of mischarged Val-tRNA(Ile). The protein is Isoleucine--tRNA ligase of Pseudomonas putida (strain GB-1).